The chain runs to 1091 residues: TATA element modulatory factor (1091 aa).

Disordered stretches follow at residues 42-86 (IPYG…KPVR) and 100-280 (FLSP…DAKS). Positions 57–81 (WDTSTWGLNSTSSEPQSPPTASQAI) are enriched in polar residues. Phosphoserine is present on residues serine 73, serine 78, serine 112, and serine 136. Low complexity-rich tracts occupy residues 111–122 (KSPVVSKPPSKS), 131–142 (SSLQESSSPGQS), and 194–211 (SENV…TTST). Serine 213 is subject to Phosphoserine. Positions 217 to 234 (ETKDMALEPKEQKHEDRQ) are enriched in basic and acidic residues. Low complexity-rich tracts occupy residues 242 to 253 (VSSFSSGTSTTS) and 264 to 273 (ISESSASSRQ). A phosphoserine mark is found at serine 324, serine 326, serine 329, serine 334, serine 340, and serine 357. The segment at 329-338 (SLDSRSVSEI) is interaction with Elongin BC complex. Positions 360–443 (TPKTKVVEST…NQPKAPPEKE (84 aa)) are disordered. Over residues 368-379 (STEENAEEEEGN) the composition is skewed to acidic residues. A phosphoserine mark is found at serine 411 and serine 540. 2 coiled-coil regions span residues 443 to 767 (EDVC…STAR) and 824 to 894 (IQMS…SQLE). Phosphoserine is present on residues serine 923 and serine 926. Phosphothreonine is present on threonine 927. At serine 931 the chain carries Phosphoserine. Residues 984–1090 (IENLQSQLKL…QIDELLRQRL (107 aa)) adopt a coiled-coil conformation.

In terms of assembly, component of the SNF/SWI transcription factor complexes. Interacts with RAB6A. Interacts with TCEB1. Interacts with STAT3 and FER. Interacts with TRNP1; may regulate TRNP1 proteasomal degradation. Phosphorylated by FER.

It is found in the cytoplasm. It localises to the nucleus. Its subcellular location is the golgi apparatus membrane. Functionally, potential coactivator of the androgen receptor. May play critical roles in two RAB6-dependent retrograde transport processes: one from endosomes to the Golgi and the other from the Golgi to the ER. Mediates STAT3 degradation. The polypeptide is TATA element modulatory factor (Tmf1) (Mus musculus (Mouse)).